Reading from the N-terminus, the 119-residue chain is Ribonuclease P protein component (119 aa).

This sequence belongs to the RnpA family. As to quaternary structure, consists of a catalytic RNA component (M1 or rnpB) and a protein subunit.

The enzyme catalyses Endonucleolytic cleavage of RNA, removing 5'-extranucleotides from tRNA precursor.. RNaseP catalyzes the removal of the 5'-leader sequence from pre-tRNA to produce the mature 5'-terminus. It can also cleave other RNA substrates such as 4.5S RNA. The protein component plays an auxiliary but essential role in vivo by binding to the 5'-leader sequence and broadening the substrate specificity of the ribozyme. This is Ribonuclease P protein component from Chlamydia muridarum (strain MoPn / Nigg).